A 641-amino-acid chain; its full sequence is Protein zwilch (641 aa).

Position 312 is a phosphoserine (Ser312).

The protein belongs to the ZWILCH family. As to quaternary structure, component of the RZZ complex composed of rod, Zw10 and Zwilch.

It localises to the cytoplasm. The protein localises to the chromosome. The protein resides in the centromere. Its subcellular location is the kinetochore. It is found in the cytoskeleton. It localises to the spindle. Functionally, essential component of the mitotic checkpoint, which prevents cells from prematurely exiting mitosis. Required for the assembly of the dynein-dynactin, Mad2 complexes and spindly/CG15415 onto kinetochores. Its function related to the spindle assembly machinery is proposed to depend on its association in the RZZ complex. Failure to assemble the complex due to the absence of any one of its components, results in the incorrect redistribution of the remaining components to diverse membrane compartments. This chain is Protein zwilch, found in Drosophila melanogaster (Fruit fly).